The sequence spans 37 residues: Large ribosomal subunit protein bL36 (37 aa).

It belongs to the bacterial ribosomal protein bL36 family.

The sequence is that of Large ribosomal subunit protein bL36 from Mycoplasmopsis pulmonis (strain UAB CTIP) (Mycoplasma pulmonis).